The following is a 78-amino-acid chain: Large ribosomal subunit protein bL28 (78 aa).

Residues 1–27 (MSAYCQVTGRKPSFGKSVSHSHRRTNR) are disordered.

It belongs to the bacterial ribosomal protein bL28 family.

The polypeptide is Large ribosomal subunit protein bL28 (Corynebacterium kroppenstedtii (strain DSM 44385 / JCM 11950 / CIP 105744 / CCUG 35717)).